The sequence spans 150 residues: Histone H2A.1 (150 aa).

M1 is modified (N-acetylmethionine). Composition is skewed to basic residues over residues 1 to 24 (MDAS…KKSV) and 141 to 150 (SKAKKSPKKA). 2 disordered regions span residues 1–26 (MDAS…SVTR) and 128–150 (RKEN…PKKA). Short sequence motifs (SPKK motif) lie at residues 139–142 (SPSK) and 146–149 (SPKK).

Belongs to the histone H2A family. In terms of assembly, the nucleosome is a histone octamer containing two molecules each of H2A, H2B, H3 and H4 assembled in one H3-H4 heterotetramer and two H2A-H2B heterodimers. The octamer wraps approximately 147 bp of DNA. As to expression, high expression in root meristematic tissues, moderate in whole shoot and very low in mature leaves.

The protein resides in the nucleus. It is found in the chromosome. Its function is as follows. Core component of nucleosome. Nucleosomes wrap and compact DNA into chromatin, limiting DNA accessibility to the cellular machineries which require DNA as a template. Histones thereby play a central role in transcription regulation, DNA repair, DNA replication and chromosomal stability. DNA accessibility is regulated via a complex set of post-translational modifications of histones, also called histone code, and nucleosome remodeling. The polypeptide is Histone H2A.1 (Pisum sativum (Garden pea)).